We begin with the raw amino-acid sequence, 355 residues long: IGF-like family receptor 1 (355 aa).

Residues Met1–Ala22 form the signal peptide. Residues Ser23–Pro163 lie on the Extracellular side of the membrane. Residues Lys120–Trp147 are disordered. A compositionally biased stretch (low complexity) spans Ala132 to Ser144. A helical transmembrane segment spans residues Leu164–Leu184. At Trp185–Ala355 the chain is on the cytoplasmic side.

The protein localises to the cell membrane. In terms of biological role, probable cell membrane receptor for the IGF-like family proteins. Binds IGFL1 and IGFL3 with a higher affinity. May also bind IGFL2. The protein is IGF-like family receptor 1 (IGFLR1) of Homo sapiens (Human).